The sequence spans 92 residues: Small ribosomal subunit protein uS19 (92 aa).

Belongs to the universal ribosomal protein uS19 family.

In terms of biological role, protein S19 forms a complex with S13 that binds strongly to the 16S ribosomal RNA. This chain is Small ribosomal subunit protein uS19, found in Prochlorococcus marinus (strain MIT 9312).